The sequence spans 375 residues: 23S rRNA (uracil(747)-C(5))-methyltransferase RlmC (375 aa).

[4Fe-4S] cluster is bound by residues C3, C11, C14, and C87. Q212, F241, E262, and N307 together coordinate S-adenosyl-L-methionine. C334 serves as the catalytic Nucleophile.

This sequence belongs to the class I-like SAM-binding methyltransferase superfamily. RNA M5U methyltransferase family. RlmC subfamily.

The catalysed reaction is uridine(747) in 23S rRNA + S-adenosyl-L-methionine = 5-methyluridine(747) in 23S rRNA + S-adenosyl-L-homocysteine + H(+). Functionally, catalyzes the formation of 5-methyl-uridine at position 747 (m5U747) in 23S rRNA. This chain is 23S rRNA (uracil(747)-C(5))-methyltransferase RlmC, found in Yersinia enterocolitica serotype O:8 / biotype 1B (strain NCTC 13174 / 8081).